The chain runs to 64 residues: Large ribosomal subunit protein bL35 (64 aa).

The protein belongs to the bacterial ribosomal protein bL35 family.

This is Large ribosomal subunit protein bL35 from Desulforamulus reducens (strain ATCC BAA-1160 / DSM 100696 / MI-1) (Desulfotomaculum reducens).